The chain runs to 290 residues: 4-hydroxy-3-methylbut-2-enyl diphosphate reductase (290 aa).

Residue Cys13 coordinates [4Fe-4S] cluster. (2E)-4-hydroxy-3-methylbut-2-enyl diphosphate contacts are provided by His41 and His75. Dimethylallyl diphosphate contacts are provided by His41 and His75. Isopentenyl diphosphate-binding residues include His41 and His75. Cys97 is a [4Fe-4S] cluster binding site. His129 provides a ligand contact to (2E)-4-hydroxy-3-methylbut-2-enyl diphosphate. His129 contributes to the dimethylallyl diphosphate binding site. Residue His129 coordinates isopentenyl diphosphate. The Proton donor role is filled by Glu131. Thr167 contributes to the (2E)-4-hydroxy-3-methylbut-2-enyl diphosphate binding site. Cys198 is a [4Fe-4S] cluster binding site. Residues Ser226, Ser227, Asn228, and Ser270 each contribute to the (2E)-4-hydroxy-3-methylbut-2-enyl diphosphate site. Positions 226, 227, 228, and 270 each coordinate dimethylallyl diphosphate. The isopentenyl diphosphate site is built by Ser226, Ser227, Asn228, and Ser270.

Belongs to the IspH family. Requires [4Fe-4S] cluster as cofactor.

The enzyme catalyses isopentenyl diphosphate + 2 oxidized [2Fe-2S]-[ferredoxin] + H2O = (2E)-4-hydroxy-3-methylbut-2-enyl diphosphate + 2 reduced [2Fe-2S]-[ferredoxin] + 2 H(+). The catalysed reaction is dimethylallyl diphosphate + 2 oxidized [2Fe-2S]-[ferredoxin] + H2O = (2E)-4-hydroxy-3-methylbut-2-enyl diphosphate + 2 reduced [2Fe-2S]-[ferredoxin] + 2 H(+). The protein operates within isoprenoid biosynthesis; dimethylallyl diphosphate biosynthesis; dimethylallyl diphosphate from (2E)-4-hydroxy-3-methylbutenyl diphosphate: step 1/1. Its pathway is isoprenoid biosynthesis; isopentenyl diphosphate biosynthesis via DXP pathway; isopentenyl diphosphate from 1-deoxy-D-xylulose 5-phosphate: step 6/6. In terms of biological role, catalyzes the conversion of 1-hydroxy-2-methyl-2-(E)-butenyl 4-diphosphate (HMBPP) into a mixture of isopentenyl diphosphate (IPP) and dimethylallyl diphosphate (DMAPP). Acts in the terminal step of the DOXP/MEP pathway for isoprenoid precursor biosynthesis. This chain is 4-hydroxy-3-methylbut-2-enyl diphosphate reductase, found in Bacteroides fragilis (strain ATCC 25285 / DSM 2151 / CCUG 4856 / JCM 11019 / LMG 10263 / NCTC 9343 / Onslow / VPI 2553 / EN-2).